A 389-amino-acid polypeptide reads, in one-letter code: Protein CysO (389 aa).

K127 is modified (N6-(pyridoxal phosphate)lysine). Residues N155, 261–265 (GTSGH), and S341 each bind pyridoxal 5'-phosphate.

It belongs to the cysteine synthase/cystathionine beta-synthase family. Homodimer. Pyridoxal 5'-phosphate is required as a cofactor.

The enzyme catalyses O-acetyl-L-serine + hydrogen sulfide = L-cysteine + acetate. It catalyses the reaction O-phospho-L-serine + hydrogen sulfide + H(+) = L-cysteine + phosphate. The catalysed reaction is L-homocysteine + L-serine = L,L-cystathionine + H2O. The protein operates within amino-acid biosynthesis; L-cysteine biosynthesis; L-cysteine from L-serine: step 2/2. Cysteine synthase that can also catalyze the synthesis of S-sulfo-L-cysteine from thiosulfate and O(3)-acetyl-L-serine, as well as the sulfhydrylation of L-serine by sulfide. In Aeropyrum pernix (strain ATCC 700893 / DSM 11879 / JCM 9820 / NBRC 100138 / K1), this protein is Protein CysO (cysO).